A 108-amino-acid polypeptide reads, in one-letter code: Dormancy-associated protein homolog 1 (108 aa).

The segment at 28-59 is disordered; the sequence is DIKGVGEGSSSKTVAAVAGSPGTPTTPGSARK. Residue Ser47 is modified to Phosphoserine. Thr50 carries the post-translational modification Phosphothreonine.

It belongs to the DRM1/ARP family. As to expression, expressed mainly in the low bolt.

This chain is Dormancy-associated protein homolog 1, found in Arabidopsis thaliana (Mouse-ear cress).